A 1408-amino-acid chain; its full sequence is ABC transporter B family member 20 (1408 aa).

A disordered region spans residues His14–Ala49. Over residues Pro20–Ala39 the composition is skewed to low complexity. The chain crosses the membrane as a helical span at residues Val86–Leu106. Residues Met88–Gln381 enclose the ABC transmembrane type-1 1 domain. Asn120 carries an N-linked (GlcNAc...) asparagine glycan. 3 consecutive transmembrane segments (helical) span residues Ile141–Leu161, Val214–Val233, and Ile238–Leu260. N-linked (GlcNAc...) asparagine glycosylation is present at Asn293. Helical transmembrane passes span Gly312 to Cys332 and Gly353 to Ala373. Residues Ile414–Cys649 enclose the ABC transporter 1 domain. Gly449–Ser456 lines the ATP pocket. Residue Asn451 is glycosylated (N-linked (GlcNAc...) asparagine). Disordered stretches follow at residues Ser676–Cys735 and Leu752–His816. Residues Cys762–Glu771 show a composition bias toward polar residues. Asn768 is a glycosylation site (N-linked (GlcNAc...) asparagine). A compositionally biased stretch (basic and acidic residues) spans Asp802–His816. Residues Ala836–Lys1124 enclose the ABC transmembrane type-1 2 domain. 6 consecutive transmembrane segments (helical) span residues Leu841 to Val861, Leu881 to Phe901, Ile959 to Trp979, Leu983 to Leu1003, Ile1062 to Trp1082, and Met1103 to Leu1123. The ABC transporter 2 domain maps to Ile1159 to Pro1396. Residue Asn1179 is glycosylated (N-linked (GlcNAc...) asparagine). Residue Gly1194–Ser1201 participates in ATP binding. N-linked (GlcNAc...) asparagine glycosylation is found at Asn1261 and Asn1347.

This sequence belongs to the ABC transporter superfamily. ABCB family. Multidrug resistance exporter (TC 3.A.1.201) subfamily. As to expression, expressed in aerial tissues.

It is found in the membrane. It carries out the reaction (indol-3-yl)acetate(in) + ATP + H2O = (indol-3-yl)acetate(out) + ADP + phosphate + H(+). Its function is as follows. Probable auxin efflux transporter that contributes, together with ABCB6 and in a FKBP42/TWD1-dependent manner, to the regulation of leaf position and morphology, internode distribution, roots development, and inflorescence organization, probably by modulating auxin repartition. This Arabidopsis thaliana (Mouse-ear cress) protein is ABC transporter B family member 20.